The chain runs to 252 residues: Large ribosomal subunit protein uL4 (252 aa).

It belongs to the universal ribosomal protein uL4 family. As to quaternary structure, part of the 50S ribosomal subunit.

In terms of biological role, one of the primary rRNA binding proteins, this protein initially binds near the 5'-end of the 23S rRNA. It is important during the early stages of 50S assembly. It makes multiple contacts with different domains of the 23S rRNA in the assembled 50S subunit and ribosome. Its function is as follows. Forms part of the polypeptide exit tunnel. This is Large ribosomal subunit protein uL4 from Methanococcus aeolicus (strain ATCC BAA-1280 / DSM 17508 / OCM 812 / Nankai-3).